We begin with the raw amino-acid sequence, 212 residues long: Orotate phosphoribosyltransferase (212 aa).

A 5-phospho-alpha-D-ribose 1-diphosphate-binding site is contributed by K26. Residue 34-35 (FF) coordinates orotate. Residues 72 to 73 (YK), R98, K99, K102, H104, and 123 to 131 (DDVISAGTS) each bind 5-phospho-alpha-D-ribose 1-diphosphate. The orotate site is built by S127 and R155.

This sequence belongs to the purine/pyrimidine phosphoribosyltransferase family. PyrE subfamily. As to quaternary structure, homodimer. Requires Mg(2+) as cofactor.

It catalyses the reaction orotidine 5'-phosphate + diphosphate = orotate + 5-phospho-alpha-D-ribose 1-diphosphate. The protein operates within pyrimidine metabolism; UMP biosynthesis via de novo pathway; UMP from orotate: step 1/2. Its function is as follows. Catalyzes the transfer of a ribosyl phosphate group from 5-phosphoribose 1-diphosphate to orotate, leading to the formation of orotidine monophosphate (OMP). The polypeptide is Orotate phosphoribosyltransferase (Thiobacillus denitrificans (strain ATCC 25259 / T1)).